A 362-amino-acid polypeptide reads, in one-letter code: Aspartate carbamoyltransferase catalytic subunit (362 aa).

The disordered stretch occupies residues 1–22; it reads MPKTAMTDSTSKTSTNTASSDM. The segment covering 7-20 has biased composition (low complexity); it reads TDSTSKTSTNTASS. Residues R100 and T101 each contribute to the carbamoyl phosphate site. K128 is an L-aspartate binding site. Residues R150, H180, and Q183 each coordinate carbamoyl phosphate. Residues R214 and R269 each coordinate L-aspartate. Carbamoyl phosphate contacts are provided by G310 and P311.

Belongs to the aspartate/ornithine carbamoyltransferase superfamily. ATCase family. Heterododecamer (2C3:3R2) of six catalytic PyrB chains organized as two trimers (C3), and six regulatory PyrI chains organized as three dimers (R2).

It carries out the reaction carbamoyl phosphate + L-aspartate = N-carbamoyl-L-aspartate + phosphate + H(+). It functions in the pathway pyrimidine metabolism; UMP biosynthesis via de novo pathway; (S)-dihydroorotate from bicarbonate: step 2/3. Catalyzes the condensation of carbamoyl phosphate and aspartate to form carbamoyl aspartate and inorganic phosphate, the committed step in the de novo pyrimidine nucleotide biosynthesis pathway. This chain is Aspartate carbamoyltransferase catalytic subunit, found in Psychrobacter sp. (strain PRwf-1).